The chain runs to 294 residues: Ventral anterior homeobox 2b (294 aa).

Positions 1-10 (MGDGVSEERS) are enriched in basic and acidic residues. 5 disordered regions span residues 1–27 (MGDG…VRDR), 43–65 (KDIP…DSQS), 149–168 (RRTK…SSST), 190–223 (PAPP…PVIS), and 272–294 (SSAF…KSTS). Positions 98-157 (PKRTRTSFTAEQLYRLELEFQRCQYVVGRERTELARQLNLSETQVKVWFQNRRTKQKKDQ) form a DNA-binding region, homeobox. A compositionally biased stretch (basic and acidic residues) spans 154–165 (KKDQSRDSEKRS). A compositionally biased stretch (low complexity) spans 197-219 (SSQNNMGTSSGNGTSLGTSGSTS). A compositionally biased stretch (basic and acidic residues) spans 279–288 (TRLDRKDTAS).

This sequence belongs to the EMX homeobox family.

Its subcellular location is the nucleus. In terms of biological role, transcription factor that may function in dorsoventral specification of the forebrain. Regulates the expression of Wnt signaling antagonists. The polypeptide is Ventral anterior homeobox 2b (vax2-b) (Xenopus laevis (African clawed frog)).